A 75-amino-acid chain; its full sequence is Small ribosomal subunit protein bS18 (75 aa).

It belongs to the bacterial ribosomal protein bS18 family. As to quaternary structure, part of the 30S ribosomal subunit. Forms a tight heterodimer with protein bS6.

Its function is as follows. Binds as a heterodimer with protein bS6 to the central domain of the 16S rRNA, where it helps stabilize the platform of the 30S subunit. In Klebsiella pneumoniae (strain 342), this protein is Small ribosomal subunit protein bS18.